The following is a 695-amino-acid chain: Segment polarity protein dishevelled homolog DVL-1 (695 aa).

In terms of domain architecture, DIX spans 1–85 (MAETKIIYHM…RVVSWLVLAE (85 aa)). The interval 89 to 235 (SDAGSQGTDS…QRLRQTDRAS (147 aa)) is disordered. Basic residues predominate over residues 142–151 (SHRRERARRR). A compositionally biased stretch (basic and acidic residues) spans 152-171 (NRDEAARTNGHPRGDRRRDL). The span at 177–192 (SASTVLSSELESSSFI) shows a compositional bias: low complexity. At S194 the chain carries Phosphoserine. The span at 201-214 (SRLSSSTEQSTSSR) shows a compositional bias: low complexity. Basic residues predominate over residues 215–228 (LVRKHKCRRRKQRL). The PDZ domain occupies 251–323 (TVTLNMERHH…NDDAVRVLRE (73 aa)). A DEP domain is found at 425 to 499 (PDSGLEIRDR…SEQCYYVFGD (75 aa)). Residues 559–580 (SCGSGSAGSQQSEGSKSSGSTR) show a composition bias toward low complexity. The tract at residues 559–641 (SCGSGSAGSQ…SQASAVAPGL (83 aa)) is disordered. The span at 622 to 635 (SQLSRGSSPRSQAS) shows a compositional bias: polar residues.

The protein belongs to the DSH family. Interacts with CXXC4. Interacts (via PDZ domain) with TMEM88. Interacts with BRD7 and INVS. Interacts (via PDZ domain) with VANGL1 and VANGL2 (via C-terminus). Interacts (via PDZ domain) with NXN. Interacts with ARRB1; the interaction is enhanced by phosphorylation of DVL1. Interacts with CYLD. Interacts (via PDZ domain) with RYK. Self-associates (via DIX domain) and forms higher homooligomers. Interacts (via PDZ domain) with DACT1 and FZD7, where DACT1 and FZD7 compete for the same binding site. Interacts (via DEP domain) with MUSK; the interaction is direct and mediates the formation a DVL1, MUSK and PAK1 ternary complex involved in AChR clustering. Interacts with DCDC2. Interacts with FOXK2. Interacts with PKD1 (via extracellular domain). Interacts (via PDZ domain) with CCDC88C/DAPLE; competes with CCDC88C for binding to frizzled receptor FZD7 and dissociates from CCDC88C following initiation of non-canonical Wnt signaling when CCDC88C displaces DVL1 from ligand-activated FZD7. Ubiquitinated; undergoes both 'Lys-48'-linked ubiquitination, leading to its subsequent degradation by the ubiquitin-proteasome pathway, and 'Lys-63'-linked ubiquitination. The interaction with INVS is required for ubiquitination. Deubiquitinated by CYLD, which acts on 'Lys-63'-linked ubiquitin chains. In terms of tissue distribution, high levels are seen in the brain, testis and kidney, lower levels in the ovary, breast, muscle, liver and small intestine, and very low levels are seen in the spleen and thymus. A moderate level expression is seen in the heart.

Its subcellular location is the cell membrane. The protein resides in the cytoplasm. The protein localises to the cytosol. It localises to the cytoplasmic vesicle. Participates in Wnt signaling by binding to the cytoplasmic C-terminus of frizzled family members and transducing the Wnt signal to down-stream effectors. Plays a role both in canonical and non-canonical Wnt signaling. Plays a role in the signal transduction pathways mediated by multiple Wnt genes. Required for LEF1 activation upon WNT1 and WNT3A signaling. DVL1 and PAK1 form a ternary complex with MUSK which is important for MUSK-dependent regulation of AChR clustering during the formation of the neuromuscular junction (NMJ). The sequence is that of Segment polarity protein dishevelled homolog DVL-1 (Dvl1) from Mus musculus (Mouse).